A 371-amino-acid chain; its full sequence is Leucine-rich repeat-containing protein 2 (371 aa).

LRR repeat units lie at residues 122–143 (HLREWYISNTLIQIIPTYIQLF), 145–166 (AMRILDLPKNQISHLPAEIGCL), 168–189 (NLKELNVGFNYLKSIPPELGDC), 191–214 (NLERLDCSGNLELMELPFELSNLK), 215–235 (QVTFVDISANKFSSVPICVLR), 238–260 (NLQWLDISSNNLTDLPQDIDRLE), 261–283 (ELQSFLLYKNKLTYLPYSMLNLK), 284–305 (KLTLLVVSGDHLVELPTALCDS), and 308–329 (PLKFVSLMDNPIDNAQCEDGNE).

This Homo sapiens (Human) protein is Leucine-rich repeat-containing protein 2 (LRRC2).